We begin with the raw amino-acid sequence, 588 residues long: Aspartate--tRNA ligase (588 aa).

Glu172 is an L-aspartate binding site. An aspartate region spans residues 196–199 (QLFK). Arg218 is an L-aspartate binding site. ATP is bound by residues 218–220 (RDE) and Gln227. His449 is an L-aspartate binding site. Glu483 contributes to the ATP binding site. Arg490 is a binding site for L-aspartate. ATP is bound at residue 535–538 (GLDR).

Belongs to the class-II aminoacyl-tRNA synthetase family. Type 1 subfamily. Homodimer.

It is found in the cytoplasm. It carries out the reaction tRNA(Asp) + L-aspartate + ATP = L-aspartyl-tRNA(Asp) + AMP + diphosphate. In terms of biological role, catalyzes the attachment of L-aspartate to tRNA(Asp) in a two-step reaction: L-aspartate is first activated by ATP to form Asp-AMP and then transferred to the acceptor end of tRNA(Asp). This is Aspartate--tRNA ligase from Pasteurella multocida (strain Pm70).